The chain runs to 535 residues: Phosphoenolpyruvate carboxykinase (ATP) 1 (535 aa).

Substrate contacts are provided by arginine 58, tyrosine 193, and lysine 199. ATP is bound by residues lysine 199, histidine 218, and 234–242 (GLSGTGKTT). The Mn(2+) site is built by lysine 199 and histidine 218. Position 255 (aspartate 255) interacts with Mn(2+). Residues glutamate 283, arginine 321, 440–441 (RI), and threonine 446 contribute to the ATP site. Residue arginine 321 coordinates substrate.

It belongs to the phosphoenolpyruvate carboxykinase (ATP) family. Requires Mn(2+) as cofactor.

The protein localises to the cytoplasm. It carries out the reaction oxaloacetate + ATP = phosphoenolpyruvate + ADP + CO2. The protein operates within carbohydrate biosynthesis; gluconeogenesis. Involved in the gluconeogenesis. Catalyzes the conversion of oxaloacetate (OAA) to phosphoenolpyruvate (PEP) through direct phosphoryl transfer between the nucleoside triphosphate and OAA. This Salinibacter ruber (strain DSM 13855 / M31) protein is Phosphoenolpyruvate carboxykinase (ATP) 1.